A 98-amino-acid polypeptide reads, in one-letter code: NADH-ubiquinone oxidoreductase chain 4L (98 aa).

3 helical membrane-spanning segments follow: residues 2–22, 26–46, and 58–79; these read PSTFFNLTMAFSLSLLGTLMF, LMSTLLCLEGMVLSLFIMTSV, and PIPITILVFAACEAAVGLALLV.

Belongs to the complex I subunit 4L family. As to quaternary structure, core subunit of respiratory chain NADH dehydrogenase (Complex I) which is composed of 45 different subunits.

It is found in the mitochondrion inner membrane. It carries out the reaction a ubiquinone + NADH + 5 H(+)(in) = a ubiquinol + NAD(+) + 4 H(+)(out). In terms of biological role, core subunit of the mitochondrial membrane respiratory chain NADH dehydrogenase (Complex I) which catalyzes electron transfer from NADH through the respiratory chain, using ubiquinone as an electron acceptor. Part of the enzyme membrane arm which is embedded in the lipid bilayer and involved in proton translocation. This chain is NADH-ubiquinone oxidoreductase chain 4L, found in Mus musculus (Mouse).